The sequence spans 310 residues: tRNA dimethylallyltransferase (310 aa).

5–12 is a binding site for ATP; sequence GPTASGKS. Substrate is bound at residue 7 to 12; that stretch reads TASGKS. The tract at residues 30 to 33 is interaction with substrate tRNA; the sequence is DSMQ.

Belongs to the IPP transferase family. In terms of assembly, monomer. The cofactor is Mg(2+).

It carries out the reaction adenosine(37) in tRNA + dimethylallyl diphosphate = N(6)-dimethylallyladenosine(37) in tRNA + diphosphate. Catalyzes the transfer of a dimethylallyl group onto the adenine at position 37 in tRNAs that read codons beginning with uridine, leading to the formation of N6-(dimethylallyl)adenosine (i(6)A). The polypeptide is tRNA dimethylallyltransferase (Rhodopseudomonas palustris (strain HaA2)).